We begin with the raw amino-acid sequence, 163 residues long: MSTETKNYITPAGWQALKDELYQLVNKERPEIVQIVNWAAGNGDRSENGDYLYGKRRMREIDRRIRFLTKRLEAAVVVDPELREATDQVFFGATVGLLRDDGREQTVKIVGIDEIDTAQNKISWISPLARCLIKAREGDEVVLNTPEGREEIEILSVEYIKID.

Residues 54 to 76 (GKRRMREIDRRIRFLTKRLEAAV) are a coiled coil.

The protein belongs to the GreA/GreB family. GreB subfamily.

Its function is as follows. Necessary for efficient RNA polymerase transcription elongation past template-encoded arresting sites. The arresting sites in DNA have the property of trapping a certain fraction of elongating RNA polymerases that pass through, resulting in locked ternary complexes. Cleavage of the nascent transcript by cleavage factors such as GreA or GreB allows the resumption of elongation from the new 3'terminus. GreB releases sequences of up to 9 nucleotides in length. The sequence is that of Transcription elongation factor GreB from Neisseria meningitidis serogroup B (strain ATCC BAA-335 / MC58).